Reading from the N-terminus, the 203-residue chain is Glycerol-3-phosphate acyltransferase (203 aa).

5 consecutive transmembrane segments (helical) span residues 13-33 (TLAC…LILT), 66-86 (TLLL…LWGV), 88-108 (AGMA…WLSF), 118-138 (IGVL…AWLA), and 156-176 (IIPV…FAVM).

The protein belongs to the PlsY family. In terms of assembly, probably interacts with PlsX.

It is found in the cell inner membrane. It catalyses the reaction an acyl phosphate + sn-glycerol 3-phosphate = a 1-acyl-sn-glycero-3-phosphate + phosphate. Its pathway is lipid metabolism; phospholipid metabolism. Functionally, catalyzes the transfer of an acyl group from acyl-phosphate (acyl-PO(4)) to glycerol-3-phosphate (G3P) to form lysophosphatidic acid (LPA). This enzyme utilizes acyl-phosphate as fatty acyl donor, but not acyl-CoA or acyl-ACP. The sequence is that of Glycerol-3-phosphate acyltransferase from Sinorhizobium medicae (strain WSM419) (Ensifer medicae).